The sequence spans 260 residues: Achaete-scute homolog 2 (260 aa).

Disordered regions lie at residues 85–126 (AGAC…RNER) and 191–239 (PATR…EDSS). Composition is skewed to low complexity over residues 110-121 (ATEASSSSAAVA) and 200-218 (TQPS…STSP). Positions 118 to 170 (AAVARRNERERNRVKLVNLGFQALRQHVPHGGANKKLSKVETLRSAVEYIRAL) constitute a bHLH domain.

Efficient DNA binding requires dimerization with another bHLH protein. Forms heterodimers with bHLH transcription factor TCF3. May not heterodimerise with bHLH protein HAND1. In terms of tissue distribution, expressed in Schwann cells in the peripheral nerve (at protein level). Also expressed by endothelial cells (at protein level). May be expressed in neuronal precursor cells.

Its subcellular location is the nucleus. It localises to the cytoplasm. Functionally, transcription factor. Binds to E-box motifs 5'-CANNTG-3' in the regulatory elements of target genes, probably as a heterodimer with another basic helix-loop-helix (bHLH) protein such as the transcription factor TCF3. May bind both open and closed chromatin, acting as a pioneer transcription factor to allow other factors to bind and activate lineage-specific genes. Required during post-implantation development for the generation of some differentiated trophoblast cell types. Transcriptional activity of ASCL2 may be antagonised in a subset of trophoblast cells by bHLH transcription factor HAND1, perhaps by competing for dimerization with other bHLH proteins. Involved in differentiation and function of follicular T-helper (Tfh) cells, thereby playing a role in germinal center responses; probably modulates expression of genes involved in Tfh cell function, such as BCL6. May also act as a suppressor of Th1-, Th2- and Th17-cell differentiation. Induces the formation of stem cells in intestinal crypts in vitro, synergistically activating transcription of target genes, such as SOX9, together with TCF4/beta-catenin. May form a bistable transcriptional switch, controlling expression of its own gene together with Wnt/R-spondin signaling, and thereby maintaining stem cell characteristics. Modulates expression of target genes, including perhaps down-regulating EGR1/Krox24 and chemokine CXCL10/Mob-1 and up-regulating CXCR4 and CDKN1C/p57kip2, in Schwann cells. May play a role in reducing proliferation of Schwann cells, perhaps acting via modulation of expression of CDKN1C. May be dispensable for blastocyst formation and later embryonic function. May be involved in the determination of neuronal precursors. The protein is Achaete-scute homolog 2 (Ascl2) of Rattus norvegicus (Rat).